The following is an 877-amino-acid chain: Alanine--tRNA ligase (877 aa).

Residues H562, H566, C664, and H668 each contribute to the Zn(2+) site.

Belongs to the class-II aminoacyl-tRNA synthetase family. Zn(2+) serves as cofactor.

The protein resides in the cytoplasm. It carries out the reaction tRNA(Ala) + L-alanine + ATP = L-alanyl-tRNA(Ala) + AMP + diphosphate. Functionally, catalyzes the attachment of alanine to tRNA(Ala) in a two-step reaction: alanine is first activated by ATP to form Ala-AMP and then transferred to the acceptor end of tRNA(Ala). Also edits incorrectly charged Ser-tRNA(Ala) and Gly-tRNA(Ala) via its editing domain. The polypeptide is Alanine--tRNA ligase (Picosynechococcus sp. (strain ATCC 27264 / PCC 7002 / PR-6) (Agmenellum quadruplicatum)).